The primary structure comprises 411 residues: Putative BMP-2-inducible kinase-like protein (411 aa).

Disordered regions lie at residues 1–87, 215–280, and 392–411; these read MIAP…TQDI, SQQQ…RVSQ, and QQSQPVELDPFGAAPFPSKQ. Composition is skewed to basic and acidic residues over residues 8 to 18 and 53 to 68; these read SSEEEGQKDEE and EKRSSDSDYEQAKAKY. Positions 47–71 form a coiled coil; the sequence is EDEEEEEKRSSDSDYEQAKAKYSDM. 2 stretches are compositionally biased toward basic residues: residues 220-234 and 243-258; these read VKQRSLQKLSSRQRR and NGKRHHGTPTSKKKTL.

The protein is Putative BMP-2-inducible kinase-like protein (BMP2KL) of Homo sapiens (Human).